An 828-amino-acid polypeptide reads, in one-letter code: Periplasmic nitrate reductase (828 aa).

A signal peptide (tat-type signal) is located at residues 1–31 (MKLSRRSFMKANAVAAAAAAAGLSVPGVARA). The 4Fe-4S Mo/W bis-MGD-type domain maps to 39 to 95 (IKWDKAPCRFCGTGCGVLVGTQQGRVVACQGDPDAPVNRGLNCIKGYFLPKIMYGKD). [4Fe-4S] cluster contacts are provided by Cys-46, Cys-49, Cys-53, and Cys-81. Residues Lys-83, Gln-150, Asn-175, Cys-179, 212 to 219 (WGANMAEM), 243 to 247 (STYQH), 262 to 264 (QSD), Met-372, Gln-376, Asn-482, 508 to 509 (SD), Lys-531, Asp-558, and 718 to 727 (TGRVLEHWHT) contribute to the Mo-bis(molybdopterin guanine dinucleotide) site. Phe-794 provides a ligand contact to substrate. 2 residues coordinate Mo-bis(molybdopterin guanine dinucleotide): Asn-802 and Lys-819.

The protein belongs to the prokaryotic molybdopterin-containing oxidoreductase family. NasA/NapA/NarB subfamily. As to quaternary structure, component of the periplasmic nitrate reductase NapAB complex composed of NapA and NapB. It depends on [4Fe-4S] cluster as a cofactor. The cofactor is Mo-bis(molybdopterin guanine dinucleotide). In terms of processing, predicted to be exported by the Tat system. The position of the signal peptide cleavage has not been experimentally proven.

Its subcellular location is the periplasm. It catalyses the reaction 2 Fe(II)-[cytochrome] + nitrate + 2 H(+) = 2 Fe(III)-[cytochrome] + nitrite + H2O. Functionally, catalytic subunit of the periplasmic nitrate reductase complex NapAB. Receives electrons from NapB and catalyzes the reduction of nitrate to nitrite. In Shigella flexneri serotype 5b (strain 8401), this protein is Periplasmic nitrate reductase.